The sequence spans 249 residues: 5'-nucleotidase SurE (249 aa).

A divalent metal cation is bound by residues Asp8, Asp9, Ser39, and Asn96.

The protein belongs to the SurE nucleotidase family. The cofactor is a divalent metal cation.

Its subcellular location is the cytoplasm. It catalyses the reaction a ribonucleoside 5'-phosphate + H2O = a ribonucleoside + phosphate. In terms of biological role, nucleotidase that shows phosphatase activity on nucleoside 5'-monophosphates. In Clostridium tetani (strain Massachusetts / E88), this protein is 5'-nucleotidase SurE.